We begin with the raw amino-acid sequence, 39 residues long: Large ribosomal subunit protein bL36 (39 aa).

This sequence belongs to the bacterial ribosomal protein bL36 family.

The polypeptide is Large ribosomal subunit protein bL36 (Levilactobacillus brevis (strain ATCC 367 / BCRC 12310 / CIP 105137 / JCM 1170 / LMG 11437 / NCIMB 947 / NCTC 947) (Lactobacillus brevis)).